A 510-amino-acid chain; its full sequence is MTSSLDDIEPTAYNNMEADEEYCRRNDIHDLSSVVGDAVSQGVPDMDGQTTDSSKDPEPNSEDKKAFPPSSGSFFSPNLQGQRKKVLLKFVFTNCLLAIICFTMFVLFWGALYDTSKYLHKVKLLVVIQEPPVVILDNNSSMVVPSISYALPTFINKIPCDWDIYNSPTFQAKFDVNTPQQVNDKVVDLVYDEKYWFAINIKPNATETLFESLINDTAPLFNSTLFNQVVYETGRDPTNLKSTILPVAQTIEEYYHTFYTLNYLPPLLTNITQVYRYALTNNARYIAAAGKYNYEYYDHRPFTDRILLAPTQIGVVYCLLLTFFQFLLYGPLHVEMAKVLRPANGLIYRIAMSWFTFFFASLFFCTTTAIFQVDFTKSFGRGGFVVYWMSTWLFMLAAGGANENAVMLVITLGPQYLGFWILSFVILNIAPSFFPLALNNNVYRYGYMMPVHNVIDIYRVIFFDVTRRKMGRNYGILVALIALNTALLPFVGKYASRKLKQKALVAAKQS.

Residues 1–89 (MTSSLDDIEP…QGQRKKVLLK (89 aa)) lie on the Lumenal side of the membrane. Residues 38 to 76 (AVSQGVPDMDGQTTDSSKDPEPNSEDKKAFPPSSGSFFS) are disordered. Positions 53–66 (SSKDPEPNSEDKKA) are enriched in basic and acidic residues. The segment covering 67–76 (FPPSSGSFFS) has biased composition (low complexity). The chain crosses the membrane as a helical span at residues 90-110 (FVFTNCLLAIICFTMFVLFWG). Over 111–123 (ALYDTSKYLHKVK) the chain is Cytoplasmic. The chain crosses the membrane as a helical span at residues 124 to 144 (LLVVIQEPPVVILDNNSSMVV). Topologically, residues 145–312 (PSISYALPTF…TDRILLAPTQ (168 aa)) are lumenal. The chain crosses the membrane as a helical span at residues 313–333 (IGVVYCLLLTFFQFLLYGPLH). The Cytoplasmic segment spans residues 334 to 349 (VEMAKVLRPANGLIYR). Residues 350–370 (IAMSWFTFFFASLFFCTTTAI) traverse the membrane as a helical segment. Residues 371–381 (FQVDFTKSFGR) are Lumenal-facing. Residues 382–402 (GGFVVYWMSTWLFMLAAGGAN) traverse the membrane as a helical segment. Residues 403-416 (ENAVMLVITLGPQY) lie on the Cytoplasmic side of the membrane. A helical membrane pass occupies residues 417–437 (LGFWILSFVILNIAPSFFPLA). Residues 438–474 (LNNNVYRYGYMMPVHNVIDIYRVIFFDVTRRKMGRNY) lie on the Lumenal side of the membrane. A helical transmembrane segment spans residues 475 to 495 (GILVALIALNTALLPFVGKYA). Residues 496-510 (SRKLKQKALVAAKQS) lie on the Cytoplasmic side of the membrane.

This sequence to yeast SNG1.

The protein resides in the endoplasmic reticulum membrane. This is an uncharacterized protein from Saccharomyces cerevisiae (strain ATCC 204508 / S288c) (Baker's yeast).